A 309-amino-acid polypeptide reads, in one-letter code: Porphobilinogen deaminase (309 aa).

An S-(dipyrrolylmethanemethyl)cysteine modification is found at C240.

Belongs to the HMBS family. Monomer. Requires dipyrromethane as cofactor.

It carries out the reaction 4 porphobilinogen + H2O = hydroxymethylbilane + 4 NH4(+). It participates in porphyrin-containing compound metabolism; protoporphyrin-IX biosynthesis; coproporphyrinogen-III from 5-aminolevulinate: step 2/4. Its function is as follows. Tetrapolymerization of the monopyrrole PBG into the hydroxymethylbilane pre-uroporphyrinogen in several discrete steps. This is Porphobilinogen deaminase from Lawsonia intracellularis (strain PHE/MN1-00).